Here is a 564-residue protein sequence, read N- to C-terminus: Keratin, type II cytoskeletal 6A (564 aa).

The span at 1 to 11 (MASTSTTIRSH) shows a compositional bias: low complexity. The segment at 1–23 (MASTSTTIRSHSSSRRGFSANSA) is disordered. N-acetylalanine is present on A2. The tract at residues 2–162 (ASTSTTIRSH…DPTIQRVRAE (161 aa)) is head. The segment at 163–198 (EREQIKTLNNKFASFIDKVRFLEQQNKVLETKWTLL) is coil 1A. One can recognise an IF rod domain in the interval 163–476 (EREQIKTLNN…KLLEGEECRL (314 aa)). Residues 199–217 (QEQGTKTVRQNLEPLFEQY) are linker 1. The tract at residues 218-309 (INNLRRQLDS…ALYDAELSQM (92 aa)) is coil 1B. Positions 310 to 333 (QTHISDTSVVLSMDNNRNLDLDSI) are linker 12. Positions 334-472 (IAEVKAQYEE…ATYRKLLEGE (139 aa)) are coil 2. The segment at 473 to 564 (ECRLNGEGVG…SSSSRKSYKH (92 aa)) is tail.

It belongs to the intermediate filament family. As to quaternary structure, heterodimer of a type I and a type II keratin. KRT6 isomers associate with KRT16 and/or KRT17. Interacts with TCHP. Expressed in the corneal epithelium (at protein level).

Epidermis-specific type I keratin involved in wound healing. Involved in the activation of follicular keratinocytes after wounding, while it does not play a major role in keratinocyte proliferation or migration. Participates in the regulation of epithelial migration by inhibiting the activity of SRC during wound repair. This chain is Keratin, type II cytoskeletal 6A (KRT6A), found in Homo sapiens (Human).